The chain runs to 255 residues: Cell division protein DivIB (255 aa).

The Cytoplasmic portion of the chain corresponds to 1–30 (MKNSKVIKLQDRVPKLKNQKKRNKPPVNHR). Residues 31-51 (LILYISILFLLVLFLIYFRSP) form a helical membrane-spanning segment. The Extracellular segment spans residues 52–255 (LSNIKKISVF…FKYLDDEKKK (204 aa)). The region spanning 53–121 (SNIKKISVFG…NKIDIHIEEY (69 aa)) is the POTRA domain.

It belongs to the FtsQ/DivIB family. DivIB subfamily.

Its subcellular location is the cell membrane. In terms of biological role, cell division protein that may be involved in stabilizing or promoting the assembly of the division complex. This is Cell division protein DivIB from Bacillus cytotoxicus (strain DSM 22905 / CIP 110041 / 391-98 / NVH 391-98).